Reading from the N-terminus, the 146-residue chain is Small ribosomal subunit protein uS5 (146 aa).

Residues 8–71 form the S5 DRBM domain; sequence FKEVVVNIGR…DDAFKNIIKV (64 aa).

This sequence belongs to the universal ribosomal protein uS5 family. In terms of assembly, part of the 30S ribosomal subunit. Contacts proteins S4 and S8.

With S4 and S12 plays an important role in translational accuracy. Functionally, located at the back of the 30S subunit body where it stabilizes the conformation of the head with respect to the body. In Wolinella succinogenes (strain ATCC 29543 / DSM 1740 / CCUG 13145 / JCM 31913 / LMG 7466 / NCTC 11488 / FDC 602W) (Vibrio succinogenes), this protein is Small ribosomal subunit protein uS5.